The primary structure comprises 1249 residues: Protein STU1 (1249 aa).

Low complexity-rich tracts occupy residues 138 to 156 (LNSSGSLKAGSLSSSTATK) and 555 to 574 (AASPMPSYASSSSTGAPSSA). Disordered stretches follow at residues 138 to 161 (LNSSGSLKAGSLSSSTATKSKPHE), 545 to 619 (KQLE…NPVF), 644 to 718 (HVET…LGLG), 755 to 846 (AEHE…NGNI), 860 to 891 (AFQTPLNPKTSALRSSSAIRTPAWKDSPRPEA), and 1084 to 1118 (HPAPPSSSADNSDPMTSALSQLSLSSSKESPEKRT). Residues 581–600 (KKMDLKAMLAERRRAVKEAG) show a composition bias toward basic and acidic residues. Low complexity-rich tracts occupy residues 647–667 (TSSPSPVRSPTPSSSATRIRP) and 708–718 (SPSLSPSLGLG). Positions 755 to 774 (AEHEVDELTLKEGQKTRDDG) are enriched in basic and acidic residues. 3 stretches are compositionally biased toward polar residues: residues 809–822 (QQGNTFSTSTSGRV), 831–844 (ATGTTASLPNSRNG), and 863–878 (TPLNPKTSALRSSSAI). Residues 1089 to 1111 (SSSADNSDPMTSALSQLSLSSSK) are compositionally biased toward low complexity.

The protein belongs to the CLASP family. Interacts with microtubules.

The protein resides in the cytoplasm. Its subcellular location is the cytoskeleton. It localises to the nucleus. It is found in the spindle. Functionally, microtubule binding protein that promotes the stabilization of dynamic microtubules. Required for mitotic spindle formation. This is Protein STU1 (STU1) from Cryptococcus neoformans var. neoformans serotype D (strain JEC21 / ATCC MYA-565) (Filobasidiella neoformans).